Consider the following 431-residue polypeptide: Serine hydroxymethyltransferase (431 aa).

Residues L128 and 132 to 134 (GHL) each bind (6S)-5,6,7,8-tetrahydrofolate. K237 is subject to N6-(pyridoxal phosphate)lysine.

Belongs to the SHMT family. As to quaternary structure, homodimer. The cofactor is pyridoxal 5'-phosphate.

The protein localises to the cytoplasm. The enzyme catalyses (6R)-5,10-methylene-5,6,7,8-tetrahydrofolate + glycine + H2O = (6S)-5,6,7,8-tetrahydrofolate + L-serine. The protein operates within one-carbon metabolism; tetrahydrofolate interconversion. It functions in the pathway amino-acid biosynthesis; glycine biosynthesis; glycine from L-serine: step 1/1. In terms of biological role, catalyzes the reversible interconversion of serine and glycine with tetrahydrofolate (THF) serving as the one-carbon carrier. This reaction serves as the major source of one-carbon groups required for the biosynthesis of purines, thymidylate, methionine, and other important biomolecules. Also exhibits THF-independent aldolase activity toward beta-hydroxyamino acids, producing glycine and aldehydes, via a retro-aldol mechanism. The sequence is that of Serine hydroxymethyltransferase from Ruegeria pomeroyi (strain ATCC 700808 / DSM 15171 / DSS-3) (Silicibacter pomeroyi).